The sequence spans 228 residues: Ribonuclease HII (228 aa).

Positions 26–214 (RAVAGVDEVG…VRAHSRFPLD (189 aa)) constitute an RNase H type-2 domain. A divalent metal cation-binding residues include D32, E33, and D124.

The protein belongs to the RNase HII family. Requires Mn(2+) as cofactor. Mg(2+) serves as cofactor.

The protein localises to the cytoplasm. The catalysed reaction is Endonucleolytic cleavage to 5'-phosphomonoester.. Endonuclease that specifically degrades the RNA of RNA-DNA hybrids. This Solibacter usitatus (strain Ellin6076) protein is Ribonuclease HII.